A 168-amino-acid chain; its full sequence is Mesencephalic astrocyte-derived neurotrophic factor homolog (168 aa).

Positions 1–17 (MSRLVLLISLVIVVASA) are cleaved as a signal peptide. Cystine bridges form between Cys-22/Cys-109, Cys-25/Cys-97, Cys-55/Cys-66, and Cys-143/Cys-146.

This sequence belongs to the ARMET family. Expressed in the intestine, spermatheca and nervous system. Expressed in the hypoderm. Expressed in structures of the excretory system. Not expressed in the male gonad.

It is found in the secreted. It localises to the endoplasmic reticulum lumen. Inhibits endoplasmic reticulum (ER) stress response. Retained in the ER under normal conditions and is up-regulated and secreted by the ER in response to ER stress and hypoxia. Following secretion by the ER, directly binds to 3-O-sulfogalactosylceramide, a lipid sulfatide in the outer cell membrane of target cells. Sulfatide binding promotes its cellular uptake by endocytosis, and is required for its role in alleviating ER stress under ER stress conditions. Has a neuroprotective role, ensuring survival of dopaminergic neurons during normal growth. The protein is Mesencephalic astrocyte-derived neurotrophic factor homolog of Caenorhabditis elegans.